Reading from the N-terminus, the 131-residue chain is Ribosome-binding factor A (131 aa).

This sequence belongs to the RbfA family. In terms of assembly, monomer. Binds 30S ribosomal subunits, but not 50S ribosomal subunits or 70S ribosomes.

The protein resides in the cytoplasm. Functionally, one of several proteins that assist in the late maturation steps of the functional core of the 30S ribosomal subunit. Associates with free 30S ribosomal subunits (but not with 30S subunits that are part of 70S ribosomes or polysomes). Required for efficient processing of 16S rRNA. May interact with the 5'-terminal helix region of 16S rRNA. The polypeptide is Ribosome-binding factor A (Chromohalobacter salexigens (strain ATCC BAA-138 / DSM 3043 / CIP 106854 / NCIMB 13768 / 1H11)).